The primary structure comprises 242 residues: 1-(5-phosphoribosyl)-5-[(5-phosphoribosylamino)methylideneamino] imidazole-4-carboxamide isomerase (242 aa).

Catalysis depends on Asp-8, which acts as the Proton acceptor. The active-site Proton donor is the Asp-130.

This sequence belongs to the HisA/HisF family.

It is found in the cytoplasm. The catalysed reaction is 1-(5-phospho-beta-D-ribosyl)-5-[(5-phospho-beta-D-ribosylamino)methylideneamino]imidazole-4-carboxamide = 5-[(5-phospho-1-deoxy-D-ribulos-1-ylimino)methylamino]-1-(5-phospho-beta-D-ribosyl)imidazole-4-carboxamide. It functions in the pathway amino-acid biosynthesis; L-histidine biosynthesis; L-histidine from 5-phospho-alpha-D-ribose 1-diphosphate: step 4/9. The sequence is that of 1-(5-phosphoribosyl)-5-[(5-phosphoribosylamino)methylideneamino] imidazole-4-carboxamide isomerase from Acidithiobacillus ferrooxidans (strain ATCC 53993 / BNL-5-31) (Leptospirillum ferrooxidans (ATCC 53993)).